The following is a 223-amino-acid chain: Alpha-S2-casein (223 aa).

The first 15 residues, 1-15 (MKFFIFTCLLAVALA), serve as a signal peptide directing secretion. Residues Ser-23, Ser-24, Ser-25, Ser-72, Ser-73, Ser-74, Ser-77, Ser-145, Ser-147, Ser-151, and Ser-159 each carry the phosphoserine modification. The stretch at residues 77–141 (SAEVAPEEIK…AGPFTPTVNR (65 aa)) is a repeat. The stretch at residues 159–223 (STEVFTKKTK…TNAIPYVRYL (65 aa)) is a repeat.

This sequence belongs to the alpha-casein family. In terms of tissue distribution, mammary gland specific. Secreted in milk.

The protein resides in the secreted. Important role in the capacity of milk to transport calcium phosphate. The protein is Alpha-S2-casein (CSN1S2) of Capra hircus (Goat).